A 754-amino-acid chain; its full sequence is Phosphoribosylformylglycinamidine synthase subunit PurL (754 aa).

Histidine 52 is an active-site residue. Residues tyrosine 55 and lysine 95 each contribute to the ATP site. A Mg(2+)-binding site is contributed by glutamate 97. Substrate-binding positions include 98 to 101 and arginine 120; that span reads SHNH. The Proton acceptor role is filled by histidine 99. Aspartate 121 contributes to the Mg(2+) binding site. Residue glutamine 244 participates in substrate binding. A Mg(2+)-binding site is contributed by aspartate 272. A substrate-binding site is contributed by 316-318; sequence ESQ. ATP contacts are provided by asparagine 504 and glycine 541. Asparagine 542 is a Mg(2+) binding site. Serine 544 serves as a coordination point for substrate.

It belongs to the FGAMS family. As to quaternary structure, monomer. Part of the FGAM synthase complex composed of 1 PurL, 1 PurQ and 2 PurS subunits.

Its subcellular location is the cytoplasm. It catalyses the reaction N(2)-formyl-N(1)-(5-phospho-beta-D-ribosyl)glycinamide + L-glutamine + ATP + H2O = 2-formamido-N(1)-(5-O-phospho-beta-D-ribosyl)acetamidine + L-glutamate + ADP + phosphate + H(+). The protein operates within purine metabolism; IMP biosynthesis via de novo pathway; 5-amino-1-(5-phospho-D-ribosyl)imidazole from N(2)-formyl-N(1)-(5-phospho-D-ribosyl)glycinamide: step 1/2. Its function is as follows. Part of the phosphoribosylformylglycinamidine synthase complex involved in the purines biosynthetic pathway. Catalyzes the ATP-dependent conversion of formylglycinamide ribonucleotide (FGAR) and glutamine to yield formylglycinamidine ribonucleotide (FGAM) and glutamate. The FGAM synthase complex is composed of three subunits. PurQ produces an ammonia molecule by converting glutamine to glutamate. PurL transfers the ammonia molecule to FGAR to form FGAM in an ATP-dependent manner. PurS interacts with PurQ and PurL and is thought to assist in the transfer of the ammonia molecule from PurQ to PurL. The sequence is that of Phosphoribosylformylglycinamidine synthase subunit PurL from Salinibacter ruber (strain DSM 13855 / M31).